Reading from the N-terminus, the 121-residue chain is Large ribosomal subunit protein bL19 (121 aa).

Belongs to the bacterial ribosomal protein bL19 family.

Its function is as follows. This protein is located at the 30S-50S ribosomal subunit interface and may play a role in the structure and function of the aminoacyl-tRNA binding site. The sequence is that of Large ribosomal subunit protein bL19 from Legionella pneumophila (strain Paris).